The primary structure comprises 259 residues: Thiazole synthase (259 aa).

Lysine 95 acts as the Schiff-base intermediate with DXP in catalysis. 1-deoxy-D-xylulose 5-phosphate-binding positions include glycine 156, 183 to 184, and 205 to 206; these read AG and NS.

The protein belongs to the ThiG family. In terms of assembly, homotetramer. Forms heterodimers with either ThiH or ThiS.

It localises to the cytoplasm. The enzyme catalyses [ThiS sulfur-carrier protein]-C-terminal-Gly-aminoethanethioate + 2-iminoacetate + 1-deoxy-D-xylulose 5-phosphate = [ThiS sulfur-carrier protein]-C-terminal Gly-Gly + 2-[(2R,5Z)-2-carboxy-4-methylthiazol-5(2H)-ylidene]ethyl phosphate + 2 H2O + H(+). It functions in the pathway cofactor biosynthesis; thiamine diphosphate biosynthesis. Functionally, catalyzes the rearrangement of 1-deoxy-D-xylulose 5-phosphate (DXP) to produce the thiazole phosphate moiety of thiamine. Sulfur is provided by the thiocarboxylate moiety of the carrier protein ThiS. In vitro, sulfur can be provided by H(2)S. This Coxiella burnetii (strain RSA 331 / Henzerling II) protein is Thiazole synthase.